Consider the following 227-residue polypeptide: Isoprenyl transferase (227 aa).

Asp-13 is an active-site residue. Position 13 (Asp-13) interacts with Mg(2+). Substrate contacts are provided by residues 14–17 (GNGR), Trp-18, Arg-26, His-30, and 58–60 (STE). Catalysis depends on Asn-61, which acts as the Proton acceptor. Residues Trp-62, Arg-64, Arg-175, and 181–183 (RLS) each bind substrate. Residue Glu-194 coordinates Mg(2+).

The protein belongs to the UPP synthase family. Homodimer. Mg(2+) is required as a cofactor.

Catalyzes the condensation of isopentenyl diphosphate (IPP) with allylic pyrophosphates generating different type of terpenoids. The protein is Isoprenyl transferase of Treponema denticola (strain ATCC 35405 / DSM 14222 / CIP 103919 / JCM 8153 / KCTC 15104).